The sequence spans 345 residues: Nuclear distribution protein nudE-like 1 (345 aa).

Residues 28-190 (QSFQEARDEL…LAVRERQQEV (163 aa)) are a coiled coil. A self-association region spans residues 56-166 (VQAEQRNRDL…LDEKESLLVS (111 aa)). An interaction with KATNB1 region spans residues 64–189 (DLQADNQRLK…ELAVRERQQE (126 aa)). Residues 114–133 (YVRELEQANDDLERAKRATI) are required for interaction with PAFAH1B1. An interaction with CENPF region spans residues 175–345 (RDLRQELAVR…SAPGMLPLSV (171 aa)). An interaction with YWHAE region spans residues 189–256 (EVTRKSAPSS…SARISALNIV (68 aa)). The interaction with NEFL stretch occupies residues 191–345 (TRKSAPSSPT…SAPGMLPLSV (155 aa)). An interaction with KATNA1 region spans residues 195–256 (APSSPTLDCE…SARISALNIV (62 aa)). The residue at position 215 (Ser215) is a Phosphoserine. Residue Thr219 is modified to Phosphothreonine; by CDK1 and MAPK1. The residue at position 231 (Ser231) is a Phosphoserine. The interval 241 to 280 (TSPLTPSARISALNIVGDLLRKVGALESKLAACRNFAKDQ) is interaction with DISC1. Ser242 carries the phosphoserine; by CDK1 modification. Thr245 bears the Phosphothreonine; by CDK1 and MAPK1 mark. The tract at residues 256–291 (VGDLLRKVGALESKLAACRNFAKDQASRKSYISGNV) is required for localization to the centrosome and interaction with dynein, dynactin, tubulin gamma, PCM1 and PCNT. Cys273 is lipidated: S-palmitoyl cysteine; by ZDHHC2, ZDHHC3 and ZDHHC7. Residues 315 to 345 (GAVNGFDPAPPPPGLGSSRPSSAPGMLPLSV) are disordered. The span at 329 to 339 (LGSSRPSSAPG) shows a compositional bias: low complexity. Residue Ser344 is modified to Phosphoserine.

This sequence belongs to the nudE family. Interacts with PLEKHM1 (via N- and C-terminus). Interacts with YWHAE. Interacts directly with NEFL and indirectly with NEFH. Interacts with microtubules. Self-associates. Interacts with DISC1, dynein, dynactin, tubulin gamma, KATNA1, KATNB1, PAFAH1B1, PCM1 and PCNT. Interacts (via C-terminus) with CENPF. Interacts with ZNF365. Interacts with GTP-bound RAB9A; the interaction may lead to RAB9A-dynein motor tethering. Phosphorylated in mitosis. Can be phosphorylated by CDK1, CDK5 and MAPK1. Phosphorylation by CDK5 promotes interaction with KATNA1 and YWHAE. Post-translationally, palmitoylation at Cys-273 reduces affinity for dynein. In terms of tissue distribution, expressed in brain, heart, kidney, liver, lung, pancreas, placenta and skeletal muscle.

The protein localises to the cytoplasm. It is found in the cytoskeleton. The protein resides in the microtubule organizing center. Its subcellular location is the centrosome. It localises to the chromosome. The protein localises to the centromere. It is found in the kinetochore. The protein resides in the spindle. Its function is as follows. Required for organization of the cellular microtubule array and microtubule anchoring at the centrosome. May regulate microtubule organization at least in part by targeting the microtubule severing protein KATNA1 to the centrosome. Also positively regulates the activity of the minus-end directed microtubule motor protein dynein. May enhance dynein-mediated microtubule sliding by targeting dynein to the microtubule plus ends. Required for several dynein- and microtubule-dependent processes such as the maintenance of Golgi integrity, the centripetal motion of secretory vesicles and the coupling of the nucleus and centrosome. Also required during brain development for the migration of newly formed neurons from the ventricular/subventricular zone toward the cortical plate. Plays a role, together with DISC1, in the regulation of neurite outgrowth. Required for mitosis in some cell types but appears to be dispensible for mitosis in cortical neuronal progenitors, which instead requires NDE1. Facilitates the polymerization of neurofilaments from the individual subunits NEFH and NEFL. Positively regulates lysosome peripheral distribution and ruffled border formation in osteoclasts. Plays a role, together with DISC1, in the regulation of neurite outgrowth. May act as a RAB9A/B effector that tethers RAB9-associated late endosomes to the dynein motor for their retrograde transport to the trans-Golgi network. This is Nuclear distribution protein nudE-like 1 (NDEL1) from Homo sapiens (Human).